A 150-amino-acid polypeptide reads, in one-letter code: Large ribosomal subunit protein uL13 (150 aa).

It belongs to the universal ribosomal protein uL13 family. Part of the 50S ribosomal subunit.

Its function is as follows. This protein is one of the early assembly proteins of the 50S ribosomal subunit, although it is not seen to bind rRNA by itself. It is important during the early stages of 50S assembly. This Chlamydia trachomatis serovar A (strain ATCC VR-571B / DSM 19440 / HAR-13) protein is Large ribosomal subunit protein uL13.